We begin with the raw amino-acid sequence, 529 residues long: Mannuronan C5-epimerase (529 aa).

The first 30 residues, 1-30 (MGACAMNPQALKGSAMLAAAMLLASGAAMA), serve as a signal peptide directing secretion. PbH1 repeat units follow at residues 229-256 (GTETYISNTKMASFGYANSKSYGVSISQ), 291-313 (TTGFVIKGNTYKDNIVYGIDPHD), 315-338 (SHGLIIADNTVYGTKKKHGIIISR), 340-362 (VNDSFIFNNRSYDNKLSGLVLDR), 364-386 (SVNNFVADNEFYRNHTDGITLYE), and 387-409 (SGDNLLWGNKVIANRRHGIRVRN). Catalysis depends on histidine 312, which acts as the Proton acceptor.

The protein belongs to the D-mannuronate C5-epimerase family.

The protein resides in the periplasm. The enzyme catalyses [(1-&gt;4)-beta-D-mannuronosyl](n) = [alginate](n). It participates in glycan biosynthesis; alginate biosynthesis. In terms of biological role, catalyzes the epimerization of beta-D-mannuronate to alpha-L-guluronate during the synthesis of the linear polysaccharide alginate. In addition, is part of a periplasmic protein complex that protects alginate from degradation by AlgL by channeling the newly formed alginate polymer through a scaffold that transfers the alginate polymer through the periplasmic space to the outer membrane secretin AlgE. This Pseudomonas fluorescens protein is Mannuronan C5-epimerase.